A 322-amino-acid chain; its full sequence is Mas-related G-protein coupled receptor member X1 (322 aa).

The Extracellular portion of the chain corresponds to 1 to 30; sequence MDPTISSHDTESTPLNETGHPNCTPILTLS. A glycan (N-linked (GlcNAc...) asparagine) is linked at Asn16. Residues 31 to 51 form a helical membrane-spanning segment; the sequence is FLVLITTLVGLAGNTIVLWLL. Topologically, residues 52–59 are cytoplasmic; that stretch reads GFRMRRKA. Residues 60 to 80 traverse the membrane as a helical segment; that stretch reads ISVYILNLALADSFFLCCHFI. Residues 81–100 are Extracellular-facing; it reads DSLLRIIDFYGLYAHKLSKD. The chain crosses the membrane as a helical span at residues 101-121; it reads ILGNAAIIPYISGLSILSAIS. Topologically, residues 122-142 are cytoplasmic; sequence TERCLCVLWPIWYHCHRPRNM. Residues 143–163 traverse the membrane as a helical segment; the sequence is SAIICALIWVLSFLMGILDWF. The Extracellular segment spans residues 164-179; the sequence is SGFLGETHHHLWKNVD. The helical transmembrane segment at 180–200 threads the bilayer; that stretch reads FIITAFLIFLFMLLSGSSLAL. Residues 201-223 are Cytoplasmic-facing; that stretch reads LLRILCGPRRKPLSRLYVTIALT. A helical transmembrane segment spans residues 224–244; it reads VMVYLICGLPLGLYLFLLYWF. Over 245–257 the chain is Extracellular; sequence GVHLHYPFCHIYQ. Residues 258-278 traverse the membrane as a helical segment; that stretch reads VTAVLSCVNSSANPIIYFLVG. Over 279 to 322 the chain is Cytoplasmic; it reads SFRQHRKHRSLKRVLKRALEDTPEEDEYTDSHLHKTTEISESRY.

It belongs to the G-protein coupled receptor 1 family. Mas subfamily. As to expression, expressed in a subset of IB4-positive small diameter nociceptive dorsal root neurons.

It is found in the cell membrane. In terms of biological role, orphan receptor activated by neuropeptides terminating in Arg-Phe or Arg-Phe-amide. Mediates its action by association with G proteins that activate a phosphatidylinositol-calcium second messenger system. Its effect is mediated by G(q) and G(11) proteins. May regulate the function of nociceptive neurons by modulation of pain perception. The chain is Mas-related G-protein coupled receptor member X1 from Mus musculus (Mouse).